Consider the following 233-residue polypeptide: Large ribosomal subunit protein uL3 (233 aa).

Belongs to the universal ribosomal protein uL3 family. As to quaternary structure, part of the 50S ribosomal subunit. Forms a cluster with proteins L14 and L19.

One of the primary rRNA binding proteins, it binds directly near the 3'-end of the 23S rRNA, where it nucleates assembly of the 50S subunit. This chain is Large ribosomal subunit protein uL3, found in Ureaplasma parvum serovar 3 (strain ATCC 27815 / 27 / NCTC 11736).